The primary structure comprises 412 residues: Na(+)-translocating NADH-quinone reductase subunit B (412 aa).

3 consecutive transmembrane segments (helical) span residues 57–77, 127–147, and 163–183; these read MILVWFAVFPAMFWGMYNVGL, VFFLPIYITVFIVGGFWEVLF, and SILFALIVPPTLPLWQAALGI. T236 bears the FMN phosphoryl threonine mark. The next 5 helical transmembrane spans lie at 270–290, 297–317, 322–342, 358–378, and 381–401; these read GSIGEVSTLMILIGGAIILFG, IVAGVMIGMIATATLFNVIGS, MFSMPWYWHLVLGGFAFGMMF, WSYGVLIGVMCVLIRVVNPAY, and GMMLAILFANLFAPLFDYLVV.

Belongs to the NqrB/RnfD family. In terms of assembly, composed of six subunits; NqrA, NqrB, NqrC, NqrD, NqrE and NqrF. The cofactor is FMN.

Its subcellular location is the cell inner membrane. It carries out the reaction a ubiquinone + n Na(+)(in) + NADH + H(+) = a ubiquinol + n Na(+)(out) + NAD(+). Functionally, NQR complex catalyzes the reduction of ubiquinone-1 to ubiquinol by two successive reactions, coupled with the transport of Na(+) ions from the cytoplasm to the periplasm. NqrA to NqrE are probably involved in the second step, the conversion of ubisemiquinone to ubiquinol. This is Na(+)-translocating NADH-quinone reductase subunit B from Klebsiella pneumoniae (strain 342).